A 61-amino-acid polypeptide reads, in one-letter code: Potassium channel toxin alpha-KTx 6.9 (61 aa).

The N-terminal stretch at 1 to 23 (MNAKFILLLLVVTTTTLLPDAKG) is a signal peptide. 4 disulfides stabilise this stretch: Cys29–Cys50, Cys35–Cys55, Cys39–Cys57, and Cys45–Cys60.

The protein belongs to the short scorpion toxin superfamily. Potassium channel inhibitor family. Alpha-KTx 06 subfamily. In terms of tissue distribution, expressed by the venom gland.

It localises to the secreted. Inhibits Kv1.2/KCNA2 and Kv1.3/KCNA3 voltage-gated potassium channels. This Opistophthalmus carinatus (African yellow leg scorpion) protein is Potassium channel toxin alpha-KTx 6.9.